Reading from the N-terminus, the 255-residue chain is MSKSGLWVGTSWKMNKTLAEAMVFADGLAAADDARDQRIQRFVIPPFTAARQVKERLKATSVKVGAQNMHWDDAGAWTGEISPVMLSDCDLDIVELGHSERREHFGETDRTVGLKTAAAVKHGLVPLICIGETLAQREAGEADTVLKRQVEGAFAFLEGAARKAPVLLAYEPVWAIGVNGIPATADYADARHRLIGEVAERALGVKVPVLYGGSVNPQNCEELILQPHIDGLFIGRSAWDVGGYLDILQRVARAI.

His98 serves as the catalytic Electrophile. Residue Glu171 is the Proton acceptor of the active site. Substrate-binding residues include Gly177 and Ser214.

Belongs to the triosephosphate isomerase family. As to quaternary structure, homodimer.

It is found in the cytoplasm. It catalyses the reaction L-erythrulose 1-phosphate = D-erythrulose 4-phosphate. The protein operates within carbohydrate metabolism; erythritol degradation. In terms of biological role, catalyzes the isomerization of D-erythrulose-4P to L-erythrulose-1P. This Rhizobium meliloti (strain 1021) (Ensifer meliloti) protein is L-erythrulose-1-phosphate isomerase.